Reading from the N-terminus, the 195-residue chain is Pyridoxal 5'-phosphate synthase subunit PdxT (195 aa).

46–48 (GES) is a binding site for L-glutamine. The active-site Nucleophile is cysteine 78. Residues arginine 105 and 133–134 (IR) each bind L-glutamine. Catalysis depends on charge relay system residues histidine 169 and glutamate 171.

Belongs to the glutaminase PdxT/SNO family. In the presence of PdxS, forms a dodecamer of heterodimers. Only shows activity in the heterodimer.

It catalyses the reaction aldehydo-D-ribose 5-phosphate + D-glyceraldehyde 3-phosphate + L-glutamine = pyridoxal 5'-phosphate + L-glutamate + phosphate + 3 H2O + H(+). The enzyme catalyses L-glutamine + H2O = L-glutamate + NH4(+). Its pathway is cofactor biosynthesis; pyridoxal 5'-phosphate biosynthesis. In terms of biological role, catalyzes the hydrolysis of glutamine to glutamate and ammonia as part of the biosynthesis of pyridoxal 5'-phosphate. The resulting ammonia molecule is channeled to the active site of PdxS. The chain is Pyridoxal 5'-phosphate synthase subunit PdxT from Shouchella clausii (strain KSM-K16) (Alkalihalobacillus clausii).